The primary structure comprises 827 residues: Glycerol-3-phosphate acyltransferase (827 aa).

The short motif at 309 to 314 (CHRSHI) is the HXXXXD motif element.

The protein belongs to the GPAT/DAPAT family.

The protein localises to the cell inner membrane. It carries out the reaction sn-glycerol 3-phosphate + an acyl-CoA = a 1-acyl-sn-glycero-3-phosphate + CoA. The protein operates within phospholipid metabolism; CDP-diacylglycerol biosynthesis; CDP-diacylglycerol from sn-glycerol 3-phosphate: step 1/3. The sequence is that of Glycerol-3-phosphate acyltransferase from Ectopseudomonas mendocina (strain ymp) (Pseudomonas mendocina).